The primary structure comprises 278 residues: uncharacterized protein (278 aa).

Residues 112 to 113 (HI), 191 to 193 (VGR), and Asp217 contribute to the NAD(+) site. Residue Arg193 is part of the active site. Glu222 is a catalytic residue. The active-site Proton donor is the His241. 241–244 (HSAG) provides a ligand contact to NAD(+).

The protein belongs to the D-isomer specific 2-hydroxyacid dehydrogenase family.

This is an uncharacterized protein from Streptomyces coelicolor.